Consider the following 451-residue polypeptide: Arginine biosynthesis bifunctional protein ArgJ, mitochondrial (451 aa).

6 residues coordinate substrate: T180, K209, T220, E307, N446, and T451. The active-site Nucleophile is T220.

This sequence belongs to the ArgJ family. Heterodimer of an alpha and a beta chain. The alpha and beta chains are autoproteolytically processed from a single precursor protein within the mitochondrion.

The protein resides in the mitochondrion matrix. The catalysed reaction is N(2)-acetyl-L-ornithine + L-glutamate = N-acetyl-L-glutamate + L-ornithine. It carries out the reaction L-glutamate + acetyl-CoA = N-acetyl-L-glutamate + CoA + H(+). It functions in the pathway amino-acid biosynthesis; L-arginine biosynthesis; L-ornithine and N-acetyl-L-glutamate from L-glutamate and N(2)-acetyl-L-ornithine (cyclic): step 1/1. Its pathway is amino-acid biosynthesis; L-arginine biosynthesis; N(2)-acetyl-L-ornithine from L-glutamate: step 1/4. Catalyzes two activities which are involved in the cyclic version of arginine biosynthesis: the synthesis of acetylglutamate from glutamate and acetyl-CoA, and of ornithine by transacetylation between acetylornithine and glutamate. In Fusarium vanettenii (strain ATCC MYA-4622 / CBS 123669 / FGSC 9596 / NRRL 45880 / 77-13-4) (Fusarium solani subsp. pisi), this protein is Arginine biosynthesis bifunctional protein ArgJ, mitochondrial.